The sequence spans 344 residues: Ion-translocating oxidoreductase complex subunit D (344 aa).

The next 4 helical transmembrane spans lie at 23–43 (LVLG…GPGT), 44–64 (LLNL…MLAL), 77–99 (SALV…WLTL), and 120–140 (PFNP…LEMT). T172 bears the FMN phosphoryl threonine mark. 5 helical membrane-spanning segments follow: residues 198 to 218 (LGSA…LFLL), 222 to 242 (LFTW…SLLF), 252 to 272 (GSPL…FIVT), 285 to 305 (LVFG…GGYP), and 306 to 326 (DGVA…DYYT).

This sequence belongs to the NqrB/RnfD family. As to quaternary structure, the complex is composed of six subunits: RnfA, RnfB, RnfC, RnfD, RnfE and RnfG. FMN is required as a cofactor.

It is found in the cell inner membrane. Its function is as follows. Part of a membrane-bound complex that couples electron transfer with translocation of ions across the membrane. The polypeptide is Ion-translocating oxidoreductase complex subunit D (Pseudomonas aeruginosa (strain UCBPP-PA14)).